The following is a 170-amino-acid chain: Ureidoglycolate lyase 1 (170 aa).

The protein belongs to the ureidoglycolate lyase family. In terms of assembly, homodimer. The cofactor is Ni(2+).

The catalysed reaction is (S)-ureidoglycolate = urea + glyoxylate. It participates in nitrogen metabolism; (S)-allantoin degradation. Functionally, catalyzes the catabolism of the allantoin degradation intermediate (S)-ureidoglycolate, generating urea and glyoxylate. Involved in the utilization of allantoin as nitrogen source. The sequence is that of Ureidoglycolate lyase 1 from Rhizobium meliloti (strain 1021) (Ensifer meliloti).